We begin with the raw amino-acid sequence, 1203 residues long: Metabotropic glutamate receptor 5 (1203 aa).

A signal peptide spans 1-18; sequence MVLLLILSVLLLKEDVRG. The Extracellular portion of the chain corresponds to 19-579; sequence SAQSSERRVV…QYLRWGDPEP (561 aa). Cys-57 and Cys-99 are oxidised to a cystine. Tyr-64 is an L-glutamate binding site. Residue Asn-88 is glycosylated (N-linked (GlcNAc...) asparagine). L-glutamate contacts are provided by residues Ser-151 and 172–174; that span reads SAT. N-linked (GlcNAc...) asparagine glycosylation occurs at Asn-209. Tyr-222 contributes to the L-glutamate binding site. 8 cysteine pairs are disulfide-bonded: Cys-240–Cys-529, Cys-275–Cys-277, Cys-364–Cys-380, Cys-418–Cys-425, Cys-510–Cys-530, Cys-514–Cys-533, Cys-536–Cys-548, and Cys-551–Cys-564. Asp-304 contributes to the L-glutamate binding site. 2 N-linked (GlcNAc...) asparagine glycosylation sites follow: Asn-377 and Asn-381. L-glutamate is bound at residue Lys-395. An N-linked (GlcNAc...) asparagine glycan is attached at Asn-444. The chain crosses the membrane as a helical span at residues 580–602; it reads IAAVVFACLGLLATLFVTVIFII. Residues 603–612 are Cytoplasmic-facing; it reads YRDTPVVKSS. The chain crosses the membrane as a helical span at residues 613-635; the sequence is SRELCYIILAGICLGYLCTFCLI. Residues 636–643 lie on the Extracellular side of the membrane; that stretch reads AKPKQIYC. A disulfide bond links Cys-643 and Cys-732. The chain crosses the membrane as a helical span at residues 644–666; sequence YLQRIGIGLSPAMSYSALVTKTN. Residues 667–692 are Cytoplasmic-facing; that stretch reads RIARILAGSKKKICTKKPRFMSACAQ. Residues 693-713 form a helical membrane-spanning segment; sequence LVIAFILICIQLGIIVALFIM. Residues 714-736 lie on the Extracellular side of the membrane; the sequence is EPPDIMHDYPSIREVYLICNTTN. Asn-733 carries N-linked (GlcNAc...) asparagine glycosylation. A helical transmembrane segment spans residues 737-758; sequence LGVVTPLGYNGLLILSCTFYAF. The Cytoplasmic portion of the chain corresponds to 759 to 771; the sequence is KTRNVPANFNEAK. The chain crosses the membrane as a helical span at residues 772 to 794; sequence YIAFTMYTTCIIWLAFVPIYFGS. Over 795 to 797 the chain is Extracellular; it reads NYK. The helical transmembrane segment at 798–819 threads the bilayer; that stretch reads IITMCFSVSLSATVALGCMFVP. Topologically, residues 820-1203 are cytoplasmic; that stretch reads KVYIILAKPE…RDYTQSSSSL (384 aa). Ser-860 carries the phosphoserine modification. Arg-868 carries the post-translational modification Omega-N-methylarginine. Disordered stretches follow at residues 892 to 1054 and 1120 to 1182; these read FTPK…GSLM and TGGA…ALCI. The segment covering 905–920 has biased composition (polar residues); the sequence is TMSSSNGKSVTWAQNE. Arg-924 carries the post-translational modification Omega-N-methylarginine. A compositionally biased stretch (gly residues) spans 960 to 977; the sequence is QGAGAGGGSGPGAAGAGS. Residues 1007–1019 are compositionally biased toward low complexity; that stretch reads PAAARPRSPSPIS. A phosphoserine mark is found at Ser-1014 and Ser-1016. Polar residues-rich tracts occupy residues 1039–1054 and 1165–1176; these read HSETAARSSSSQGSLM and DSGSTTPNSPVS.

Belongs to the G-protein coupled receptor 3 family. In terms of assembly, the PPXXF motif binds HOMER1, HOMER2 and HOMER3. Interacts with RYR1, RYR2, ITPR1, SHANK1 and SHANK3. Interacts with SIAH1 and TAMALIN. Interacts with NCDN. Interacts with NECAB2. Interacts with CAMK2A.

Its subcellular location is the cell membrane. Functionally, G-protein coupled receptor for glutamate. Ligand binding causes a conformation change that triggers signaling via guanine nucleotide-binding proteins (G proteins) and modulates the activity of down-stream effectors. Signaling activates a phosphatidylinositol-calcium second messenger system and generates a calcium-activated chloride current. Plays an important role in the regulation of synaptic plasticity and the modulation of the neural network activity. The polypeptide is Metabotropic glutamate receptor 5 (Grm5) (Mus musculus (Mouse)).